The chain runs to 455 residues: Golgi pH regulator (455 aa).

The next 5 membrane-spanning stretches (helical) occupy residues 5 to 25 (IDSSIMITSQILFFGFGWLFF), 46 to 66 (VTFAFSCTMFELIIFEILGVL), 79 to 99 (LCVILLILVFMVPFYIGYFIV), 114 to 134 (CLLWLTFMYFFWKLGDPFPIL), and 150 to 170 (VGVIGVTLMALLSGFGAVNCP). An N-linked (GlcNAc...) asparagine glycan is attached at Asn-180. Helical transmembrane passes span 288–308 (FLGYFFSIYCVWKIFMATINI), 343–363 (ISFILVGIIIVTSIRGLLITL), 378–398 (VIVLLLAQIMGMYFVSSVLLI), and 425–445 (WFDVIFLVSALSSILFLYLAH).

This sequence belongs to the Golgi pH regulator (TC 1.A.38) family. Homotrimer. Interacts with RABL3; the interaction stabilizes GPR89.

The protein localises to the golgi apparatus membrane. The enzyme catalyses iodide(out) = iodide(in). The catalysed reaction is chloride(in) = chloride(out). It catalyses the reaction bromide(in) = bromide(out). It carries out the reaction fluoride(in) = fluoride(out). Functionally, voltage-gated channel that enables the transfer of monoatomic anions such as iodide, chloride, bromide and fluoride which may function in counter-ion conductance and participates in Golgi acidification. Plays a role in lymphocyte development, probably by acting as a RABL3 effector in hematopoietic cells. This is Golgi pH regulator from Mus musculus (Mouse).